Reading from the N-terminus, the 287-residue chain is Thiazole synthase (287 aa).

Catalysis depends on lysine 111, which acts as the Schiff-base intermediate with DXP. Residues glycine 172, 203–204 (AG), and 225–226 (NT) contribute to the 1-deoxy-D-xylulose 5-phosphate site. Residues 268–287 (PQEGVISTRPYGSQADEIGS) form a disordered region.

Belongs to the ThiG family. Homotetramer. Forms heterodimers with either ThiH or ThiS.

The protein localises to the cytoplasm. It catalyses the reaction [ThiS sulfur-carrier protein]-C-terminal-Gly-aminoethanethioate + 2-iminoacetate + 1-deoxy-D-xylulose 5-phosphate = [ThiS sulfur-carrier protein]-C-terminal Gly-Gly + 2-[(2R,5Z)-2-carboxy-4-methylthiazol-5(2H)-ylidene]ethyl phosphate + 2 H2O + H(+). It participates in cofactor biosynthesis; thiamine diphosphate biosynthesis. Catalyzes the rearrangement of 1-deoxy-D-xylulose 5-phosphate (DXP) to produce the thiazole phosphate moiety of thiamine. Sulfur is provided by the thiocarboxylate moiety of the carrier protein ThiS. In vitro, sulfur can be provided by H(2)S. This Rhodopirellula baltica (strain DSM 10527 / NCIMB 13988 / SH1) protein is Thiazole synthase.